The sequence spans 835 residues: Ribonucleoside-diphosphate reductase large subunit (835 aa).

The segment at 1–39 is disordered; the sequence is MPPRAPRPAGAVSPPFPPLAGPPLKARAPRARDSPLTSP. Substrate-binding positions include T262, 277-278, G308, 489-493, and 666-670; these read SC, NLCTE, and PTVSS. C278 and C506 are disulfide-bonded. The active-site Proton acceptor is N489. C491 serves as the catalytic Cysteine radical intermediate. E493 serves as the catalytic Proton acceptor.

The protein belongs to the ribonucleoside diphosphate reductase large chain family. In terms of assembly, heterotetramer composed of a homodimer of the large subunit (R1) and a homodimer of the small subunit (R2). Larger multisubunit protein complex are also active, composed of (R1)n(R2)n.

The catalysed reaction is a 2'-deoxyribonucleoside 5'-diphosphate + [thioredoxin]-disulfide + H2O = a ribonucleoside 5'-diphosphate + [thioredoxin]-dithiol. Functionally, ribonucleoside-diphosphate reductase holoenzyme provides the precursors necessary for viral DNA synthesis. Allows virus growth in non-dividing cells, as well as reactivation from latency in infected hosts. Catalyzes the biosynthesis of deoxyribonucleotides from the corresponding ribonucleotides. This Suid herpesvirus 1 (strain Kaplan) (SuHV-1) protein is Ribonucleoside-diphosphate reductase large subunit.